A 625-amino-acid chain; its full sequence is Complex I assembly factor ACAD9, mitochondrial (625 aa).

The N-terminal 41 residues, 1–41, are a transit peptide targeting the mitochondrion; that stretch reads MSGYVLFSRGATAAAAAARASRVLRVFTERRRTLHTSLQSC. Residue Lys45 is modified to N6-acetyllysine. N6-succinyllysine is present on Lys96. Catalysis depends on Glu430, which acts as the Proton acceptor. At Thr482 the chain carries Phosphothreonine. Lys525 carries the post-translational modification N6-acetyllysine; alternate. Position 525 is an N6-succinyllysine; alternate (Lys525).

The protein belongs to the acyl-CoA dehydrogenase family. Homodimer. Interacts with NDUFAF1 and ECSIT. Part of the mitochondrial complex I assembly/MCIA complex that comprises at least the core subunits TMEM126B, NDUFAF1, ECSIT and ACAD9 and complement subunits such as COA1 and TMEM186. Interacts with TMEM70 and TMEM242. Requires FAD as cofactor.

It localises to the mitochondrion inner membrane. It catalyses the reaction eicosanoyl-CoA + oxidized [electron-transfer flavoprotein] + H(+) = (2E)-eicosenoyl-CoA + reduced [electron-transfer flavoprotein]. The catalysed reaction is octadecanoyl-CoA + oxidized [electron-transfer flavoprotein] + H(+) = (2E)-octadecenoyl-CoA + reduced [electron-transfer flavoprotein]. The enzyme catalyses oxidized [electron-transfer flavoprotein] + hexadecanoyl-CoA + H(+) = (2E)-hexadecenoyl-CoA + reduced [electron-transfer flavoprotein]. It carries out the reaction decanoyl-CoA + oxidized [electron-transfer flavoprotein] + H(+) = (2E)-decenoyl-CoA + reduced [electron-transfer flavoprotein]. It catalyses the reaction nonanoyl-CoA + oxidized [electron-transfer flavoprotein] + H(+) = (2E)-nonenoyl-CoA + reduced [electron-transfer flavoprotein]. The catalysed reaction is pentadecanoyl-CoA + oxidized [electron-transfer flavoprotein] + H(+) = (2E)-pentadecenoyl-CoA + reduced [electron-transfer flavoprotein]. The enzyme catalyses undecanoyl-CoA + oxidized [electron-transfer flavoprotein] + H(+) = trans-2-undecenoyl-CoA + reduced [electron-transfer flavoprotein]. It carries out the reaction (9Z)-hexadecenoyl-CoA + oxidized [electron-transfer flavoprotein] + H(+) = (2E,9Z)-hexadecadienoyl-CoA + reduced [electron-transfer flavoprotein]. It catalyses the reaction heptadecanoyl-CoA + oxidized [electron-transfer flavoprotein] + H(+) = trans-2-heptadecenoyl-CoA + reduced [electron-transfer flavoprotein]. The catalysed reaction is (9E)-octadecenoyl-CoA + oxidized [electron-transfer flavoprotein] + H(+) = (2E,9E)-octadecadienoyl-CoA + reduced [electron-transfer flavoprotein]. The enzyme catalyses oxidized [electron-transfer flavoprotein] + (9Z)-octadecenoyl-CoA + H(+) = (2E,9Z)-octadecadienoyl-CoA + reduced [electron-transfer flavoprotein]. It carries out the reaction (9Z,12Z)-octadecadienoyl-CoA + oxidized [electron-transfer flavoprotein] + H(+) = (2E,9Z,12Z)-octadecatrienoyl-CoA + reduced [electron-transfer flavoprotein]. It catalyses the reaction (4Z,7Z,10Z,13Z,16Z,19Z)-docosahexaenoyl-CoA + oxidized [electron-transfer flavoprotein] + H(+) = (2E,4Z,7Z,10Z,13Z,16Z,19Z)-docosaheptaenoyl-CoA + reduced [electron-transfer flavoprotein]. The catalysed reaction is tetradecanoyl-CoA + oxidized [electron-transfer flavoprotein] + H(+) = (2E)-tetradecenoyl-CoA + reduced [electron-transfer flavoprotein]. Its function is as follows. As part of the MCIA complex, primarily participates in the assembly of the mitochondrial complex I and therefore plays a role in oxidative phosphorylation. This moonlighting protein also has a dehydrogenase activity toward a broad range of substrates with greater specificity for long-chain unsaturated acyl-CoAs. However, in vivo, it does not seem to play a primary role in fatty acid oxidation. In addition, the function in complex I assembly is independent of the dehydrogenase activity of the protein. In Rattus norvegicus (Rat), this protein is Complex I assembly factor ACAD9, mitochondrial.